The following is a 605-amino-acid chain: Sulfite reductase [NADPH] flavoprotein alpha-component (605 aa).

The 139-residue stretch at 70–208 (LTIIYASQTG…PAAEWRVKAL (139 aa)) folds into the Flavodoxin-like domain. FMN contacts are provided by residues 76–81 (SQTGNA), 123–126 (STHG), and 159–168 (LGDSSYEFFC). The FAD-binding FR-type domain maps to 240–454 (QNPYEATLLT…VEENNNFKLP (215 aa)). FAD is bound by residues Thr-328, Gly-362, 392–395 (RLYS), 410–412 (TVG), and 425–428 (GGAS). NADP(+)-binding positions include 525 to 526 (SR), 531 to 535 (KVYVQ), and Asp-567. Tyr-605 contributes to the FAD binding site.

It belongs to the NADPH-dependent sulphite reductase flavoprotein subunit CysJ family. This sequence in the N-terminal section; belongs to the flavodoxin family. In the C-terminal section; belongs to the flavoprotein pyridine nucleotide cytochrome reductase family. In terms of assembly, alpha(8)-beta(8). The alpha component is a flavoprotein, the beta component is a hemoprotein. FAD serves as cofactor. FMN is required as a cofactor.

It catalyses the reaction hydrogen sulfide + 3 NADP(+) + 3 H2O = sulfite + 3 NADPH + 4 H(+). Its pathway is sulfur metabolism; hydrogen sulfide biosynthesis; hydrogen sulfide from sulfite (NADPH route): step 1/1. In terms of biological role, component of the sulfite reductase complex that catalyzes the 6-electron reduction of sulfite to sulfide. This is one of several activities required for the biosynthesis of L-cysteine from sulfate. The flavoprotein component catalyzes the electron flow from NADPH -&gt; FAD -&gt; FMN to the hemoprotein component. This is Sulfite reductase [NADPH] flavoprotein alpha-component from Photobacterium profundum (strain SS9).